A 106-amino-acid chain; its full sequence is Large ribosomal subunit protein uL24 (106 aa).

This sequence belongs to the universal ribosomal protein uL24 family. As to quaternary structure, part of the 50S ribosomal subunit.

One of two assembly initiator proteins, it binds directly to the 5'-end of the 23S rRNA, where it nucleates assembly of the 50S subunit. Functionally, one of the proteins that surrounds the polypeptide exit tunnel on the outside of the subunit. In Bordetella avium (strain 197N), this protein is Large ribosomal subunit protein uL24.